We begin with the raw amino-acid sequence, 1044 residues long: Integrin alpha-V (1044 aa).

A signal peptide spans 1 to 30; the sequence is MAAPGRLLLRPRPGGLLLLLPGLLLPLADA. Over 31-988 the chain is Extracellular; that stretch reads FNLDVESPAE…WGIQPAPMPV (958 aa). 7 FG-GAP repeats span residues 32 to 98, 109 to 170, 173 to 225, 237 to 291, 292 to 357, 358 to 415, and 419 to 482; these read NLDV…RRCQ, DYAK…VEYA, RSKN…ISKY, QLAT…GKNM, SSLH…GDFQ, TTKL…GLNS, and QILE…VYPS. The N-linked (GlcNAc...) asparagine glycan is linked to Asn-74. Intrachain disulfides connect Cys-89-Cys-97, Cys-138-Cys-158, and Cys-172-Cys-185. Ca(2+) is bound by residues Asp-260, Asn-262, Asp-264, Ile-266, and Asp-268. Asn-290 and Asn-296 each carry an N-linked (GlcNAc...) asparagine glycan. The Ca(2+) site is built by Asp-314, Asn-316, Asp-318, Tyr-320, Asp-322, Asp-379, Asp-381, Asp-383, Phe-385, Asp-387, Asp-443, Asp-445, Asn-447, Tyr-449, and Asp-451. 2 cysteine pairs are disulfide-bonded: Cys-491–Cys-502 and Cys-508–Cys-565. Residue Asn-615 is glycosylated (N-linked (GlcNAc...) asparagine). Cystine bridges form between Cys-626–Cys-632 and Cys-698–Cys-711. Residues Asn-704, Asn-835, Asn-851, and Asn-869 are each glycosylated (N-linked (GlcNAc...) asparagine). 2 disulfide bridges follow: Cys-852/Cys-910 and Cys-900/Cys-905. Residues Asn-941, Asn-969, and Asn-976 are each glycosylated (N-linked (GlcNAc...) asparagine). A helical membrane pass occupies residues 989 to 1012; it reads PVWVIILAVLAGLLLLAVLVFVMY. Over 1013–1044 the chain is Cytoplasmic; the sequence is RMGFFKRVRPPQEEQEREQLQPHENGEGNSET. A GFFKR motif motif is present at residues 1015 to 1019; sequence GFFKR. The span at 1023–1038 shows a compositional bias: basic and acidic residues; that stretch reads PQEEQEREQLQPHENG. The disordered stretch occupies residues 1023-1044; that stretch reads PQEEQEREQLQPHENGEGNSET.

This sequence belongs to the integrin alpha chain family. As to quaternary structure, heterodimer of an alpha and a beta subunit. The alpha subunit is composed of a heavy and a light chain linked by a disulfide bond. Alpha-V (ITGAV) associates with either beta-1 (ITGB1), beta-3 (ITGB3), beta-5 (ITGB5), beta-6 (ITGB6) or beta-8 (ITGB8). Interacts with RAB25. Interacts with CIB1. Integrins ITGAV:ITGB3 and ITGAV:ITGB5 interact with FBLN5 (via N-terminus). ITGAV:ITGB3 and ITGAV:ITGB5 interact with CCN3. ITGAV:ITGB3 interacts with ADGRA2. ITGAV:ITGB3 interacts with FGF2; it is likely that FGF2 can simultaneously bind ITGAV:ITGB3 and FGF receptors. ITGAV:ITGB3 interacts with SELP (via C-type lectin domain); the interaction mediates cell-cell interaction and adhesion. ITGAV:ITGB3 is found in a ternary complex with CX3CR1 and CX3CL1. ITGAV:ITGB3 is found in a ternary complex with NRG1 and ERBB3. ITGAV:ITGB3 is found in a ternary complex with FGF1 and FGFR1. ITGAV:ITGB3 is found in a ternary complex with IGF1 and IGF1R. ITGAV:ITGB3 interacts with IGF2. ITGAV:ITGB3 and ITGAV:ITGB6 interact with FBN1. ITGAV:ITGB3 interacts with CD9, CD81 and CD151 (via second extracellular domain). ITGAV:ITGB6 interacts with TGFB1. ITGAV:ITGB3 interacts with PTN. Forms a complex with PTPRZ1 and PTN that stimulates endothelial cell migration through ITGB3 'Tyr-773' phosphorylation. Interacts with TM4SF19.

It is found in the cell membrane. The protein resides in the cell junction. It localises to the focal adhesion. The alpha-V (ITGAV) integrins are receptors for vitronectin, cytotactin, fibronectin, fibrinogen, laminin, matrix metalloproteinase-2, osteopontin, osteomodulin, prothrombin, thrombospondin, TGFB1 and vWF. They recognize the sequence R-G-D in a wide array of ligands. Alpha-V integrins may play a role in embryo implantation, angiogenesis and wound healing. ITGAV:ITGB3 binds to fractalkine (CX3CL1) and may act as its coreceptor in CX3CR1-dependent fractalkine signaling. ITGAV:ITGB3 binds to NRG1 (via EGF domain) and this binding is essential for NRG1-ERBB signaling. ITGAV:ITGB3 binds to FGF1 and this binding is essential for FGF1 signaling. ITGAV:ITGB3 binds to FGF2 and this binding is essential for FGF2 signaling. ITGAV:ITGB3 binds to IGF1 and this binding is essential for IGF1 signaling. ITGAV:ITGB3 binds to IGF2 and this binding is essential for IGF2 signaling. ITGAV:ITGB3 binds to IL1B and this binding is essential for IL1B signaling. ITGAV:ITGB3 binds to PLA2G2A via a site (site 2) which is distinct from the classical ligand-binding site (site 1) and this induces integrin conformational changes and enhanced ligand binding to site 1. ITGAV:ITGB3 and ITGAV:ITGB6 act as a receptor for fibrillin-1 (FBN1) and mediate R-G-D-dependent cell adhesion to FBN1. Integrin alpha-V/beta-6 or alpha-V/beta-8 (ITGAV:ITGB6 or ITGAV:ITGB8) mediates R-G-D-dependent release of transforming growth factor beta-1 (TGF-beta-1) from regulatory Latency-associated peptide (LAP), thereby playing a key role in TGF-beta-1 activation. ITGAV:ITGB3 acts as a receptor for CD40LG. ITGAV:ITGB3 binds to the Lilrb4a/Gp49b receptor and enhances the Lilrb4a-mediated inhibition of mast cell activation. ITGAV:ITGB3 also suppresses marginal zone B cell antibody production through its interaction with Lilrb4a. ITGAV:ITGB3 acts as a receptor for IBSP and promotes cell adhesion and migration to IBSP. The polypeptide is Integrin alpha-V (Itgav) (Mus musculus (Mouse)).